We begin with the raw amino-acid sequence, 80 residues long: MKLCLTFLLVLMILASVTGEKSSKHTLSRAARVKNRGPSFCKADEKPCKYHADCCNCCLGGICKPSTSWIGCSTNVFLTR.

An N-terminal signal peptide occupies residues 1 to 19 (MKLCLTFLLVLMILASVTG). Positions 20-35 (EKSSKHTLSRAARVKN) are excised as a propeptide. 2 positions are modified to 4-hydroxyproline; partial: Pro-38 and Pro-47. 4 disulfide bridges follow: Cys-41/Cys-55, Cys-48/Cys-58, Cys-54/Cys-63, and Cys-57/Cys-72. 4-hydroxyproline is present on Pro-65. Leu-78 carries the D-leucine modification. Arg-80 is a propeptide (removed by a carboxypeptidase).

In terms of processing, the natural D-Leu form of the peptide is more potent than the synthetic L-Leu form. As to expression, expressed by the venom duct.

It localises to the secreted. Functionally, iota-conotoxins bind to voltage-gated sodium channels (Nav) and act as agonists by shifting the voltage-dependence of activation to more hyperpolarized levels. Causes circular motion, convulsions, copious urination, rigid paralysis and death upon intracranial injection into mice. Causes unbalanced swimming, swimming in diagonal and vertical motion and death, when injected intraperitoneally into goldfish. L-Leu and D-Leu forms are active on both nerve and muscle. This Conus radiatus (Rayed cone) protein is Iota-conotoxin-like r11c.